A 529-amino-acid polypeptide reads, in one-letter code: Bifunctional purine biosynthesis protein PurH (529 aa).

The 148-residue stretch at 1 to 148 (MQQRRPVRRA…KNHKDVAIVV (148 aa)) folds into the MGS-like domain.

This sequence belongs to the PurH family.

It carries out the reaction (6R)-10-formyltetrahydrofolate + 5-amino-1-(5-phospho-beta-D-ribosyl)imidazole-4-carboxamide = 5-formamido-1-(5-phospho-D-ribosyl)imidazole-4-carboxamide + (6S)-5,6,7,8-tetrahydrofolate. The enzyme catalyses IMP + H2O = 5-formamido-1-(5-phospho-D-ribosyl)imidazole-4-carboxamide. The protein operates within purine metabolism; IMP biosynthesis via de novo pathway; 5-formamido-1-(5-phospho-D-ribosyl)imidazole-4-carboxamide from 5-amino-1-(5-phospho-D-ribosyl)imidazole-4-carboxamide (10-formyl THF route): step 1/1. It functions in the pathway purine metabolism; IMP biosynthesis via de novo pathway; IMP from 5-formamido-1-(5-phospho-D-ribosyl)imidazole-4-carboxamide: step 1/1. This chain is Bifunctional purine biosynthesis protein PurH, found in Salmonella schwarzengrund (strain CVM19633).